The sequence spans 161 residues: Phosphopantetheine adenylyltransferase (161 aa).

A substrate-binding site is contributed by Ser-10. ATP-binding positions include 10–11 and His-18; that span reads SF. Substrate-binding residues include Lys-42, Ala-75, and Arg-89. Residues 90–92, Glu-100, and 125–131 contribute to the ATP site; these read GLR and LSPISSS.

The protein belongs to the bacterial CoaD family. Homohexamer. It depends on Mg(2+) as a cofactor.

It localises to the cytoplasm. The catalysed reaction is (R)-4'-phosphopantetheine + ATP + H(+) = 3'-dephospho-CoA + diphosphate. It participates in cofactor biosynthesis; coenzyme A biosynthesis; CoA from (R)-pantothenate: step 4/5. Reversibly transfers an adenylyl group from ATP to 4'-phosphopantetheine, yielding dephospho-CoA (dPCoA) and pyrophosphate. This is Phosphopantetheine adenylyltransferase from Streptococcus agalactiae serotype Ia (strain ATCC 27591 / A909 / CDC SS700).